Consider the following 308-residue polypeptide: MAKENPPIVFGPVLSRRFGKSLGVDLSPSKKQCNYNCIYCELGKAKPIERMEEVIKVETLINAIQNALNNLTTPIDVLTITANGEPTLYPHLLELIQSIKPFLKGVKTLILSNGSLFYEPKVQQALKEFDIVKFSLDAIDLKAFERVDKPYSKDINKILEGILRFSQIYQGQLVAEVLLIKGVNDSANNLKLIAAFLKQINIARVDLSTIDRPSSFKAPKLSEDELLKCSLFFEGLCVSLPKRSITQAKKLISCGIDELLALISRRPLSAEEAPLILDSNAFKHLETLLNHKQITIKKVGSLEFYCAF.

Residues 18–248 (FGKSLGVDLS…SLPKRSITQA (231 aa)) form the Radical SAM core domain. [4Fe-4S] cluster-binding residues include Cys33, Cys37, and Cys40.

This sequence belongs to the UPF0026 family. It depends on [4Fe-4S] cluster as a cofactor.

This Helicobacter pylori (strain ATCC 700392 / 26695) (Campylobacter pylori) protein is UPF0026 protein HP_0117.